We begin with the raw amino-acid sequence, 526 residues long: Maturase K (526 aa).

The protein belongs to the intron maturase 2 family. MatK subfamily.

It localises to the plastid. Its subcellular location is the chloroplast. Functionally, usually encoded in the trnK tRNA gene intron. Probably assists in splicing its own and other chloroplast group II introns. The protein is Maturase K of Iris pseudacorus (Yellow flag).